The sequence spans 371 residues: MPHHYILTLFGLLPVATNISTWWNFGSMLLTCLALQVLTGFFLAVHYTANINLAFSSIVHITRDVPYGWMMQNLHAIGASMFFICIYIHIARGLYYGSYLNKETWMSGITLLITLMATAFFGYVLPWGQMSFWAATVITNLLTAVPYLGTSLTTWLWGGFAINDPTLTRFFALHFILPFAIISLSSLHIILLHEEGSSNPLGTNPDIDKIPFHPYHTHKDLLLLTLMILLLLIIVSFSPDIFHDPDNFSKANPLVTPQHIKPELYFLFAYGILRSIPNKLGGALALVMSIMILFTIPFTHTAHLRPMTFRPLSQLMFWALISTFVTITWAATKPVEPPFIIISQVTSTLYFTFFLSIPILGWVENKMMNIS.

4 helical membrane passes run 25–45 (FGSM…FLAV), 69–90 (WMMQ…YIHI), 105–125 (WMSG…GYVL), and 170–190 (FFAL…LHII). Residues H75 and H89 each contribute to the heme b site. Heme b contacts are provided by H174 and H188. H193 is an a ubiquinone binding site. The next 4 helical transmembrane spans lie at 218 to 238 (HKDL…VSFS), 280 to 300 (LGGA…PFTH), 312 to 332 (LSQL…WAAT), and 339 to 358 (FIII…LSIP).

This sequence belongs to the cytochrome b family. In terms of assembly, the cytochrome bc1 complex contains 3 respiratory subunits (MT-CYB, CYC1 and UQCRFS1), 2 core proteins (UQCRC1 and UQCRC2) and probably 6 low-molecular weight proteins. It depends on heme b as a cofactor.

The protein localises to the mitochondrion inner membrane. Component of the ubiquinol-cytochrome c reductase complex (complex III or cytochrome b-c1 complex) that is part of the mitochondrial respiratory chain. The b-c1 complex mediates electron transfer from ubiquinol to cytochrome c. Contributes to the generation of a proton gradient across the mitochondrial membrane that is then used for ATP synthesis. The protein is Cytochrome b (MT-CYB) of Antaresia childreni (Children's python).